We begin with the raw amino-acid sequence, 34 residues long: Cytochrome b6-f complex subunit 7 (34 aa).

The helical transmembrane segment at 9–29 threads the bilayer; sequence ALLSFGLIFVGWALGALLLKI.

This sequence belongs to the PetM family. The 4 large subunits of the cytochrome b6-f complex are cytochrome b6, subunit IV (17 kDa polypeptide, PetD), cytochrome f and the Rieske protein, while the 4 small subunits are PetG, PetL, PetM and PetN. The complex functions as a dimer.

Its subcellular location is the cellular thylakoid membrane. In terms of biological role, component of the cytochrome b6-f complex, which mediates electron transfer between photosystem II (PSII) and photosystem I (PSI), cyclic electron flow around PSI, and state transitions. This chain is Cytochrome b6-f complex subunit 7, found in Nostoc sp. (strain PCC 7120 / SAG 25.82 / UTEX 2576).